We begin with the raw amino-acid sequence, 430 residues long: Cytochrome c biogenesis protein CcsB (430 aa).

3 helical membrane passes run 14–34, 72–92, and 162–182; these read LRIA…GTAI, SSWF…CSWR, and AGPM…VWGS.

It belongs to the Ccs1/CcsB family. In terms of assembly, may interact with CcsA.

The protein localises to the cellular thylakoid membrane. In terms of biological role, required during biogenesis of c-type cytochromes (cytochrome c6 and cytochrome f) at the step of heme attachment. The sequence is that of Cytochrome c biogenesis protein CcsB from Prochlorococcus marinus (strain MIT 9313).